The primary structure comprises 159 residues: 2-C-methyl-D-erythritol 2,4-cyclodiphosphate synthase (159 aa).

2 residues coordinate a divalent metal cation: aspartate 10 and histidine 12. 4-CDP-2-C-methyl-D-erythritol 2-phosphate-binding positions include 10–12 (DVH) and 36–37 (HS). Histidine 44 is a binding site for a divalent metal cation. Residues 58-60 (DIG), 63-67 (FANTD), 134-137 (TTNE), and arginine 144 contribute to the 4-CDP-2-C-methyl-D-erythritol 2-phosphate site.

The protein belongs to the IspF family. As to quaternary structure, homotrimer. It depends on a divalent metal cation as a cofactor.

The enzyme catalyses 4-CDP-2-C-methyl-D-erythritol 2-phosphate = 2-C-methyl-D-erythritol 2,4-cyclic diphosphate + CMP. The protein operates within isoprenoid biosynthesis; isopentenyl diphosphate biosynthesis via DXP pathway; isopentenyl diphosphate from 1-deoxy-D-xylulose 5-phosphate: step 4/6. Its function is as follows. Involved in the biosynthesis of isopentenyl diphosphate (IPP) and dimethylallyl diphosphate (DMAPP), two major building blocks of isoprenoid compounds. Catalyzes the conversion of 4-diphosphocytidyl-2-C-methyl-D-erythritol 2-phosphate (CDP-ME2P) to 2-C-methyl-D-erythritol 2,4-cyclodiphosphate (ME-CPP) with a corresponding release of cytidine 5-monophosphate (CMP). The chain is 2-C-methyl-D-erythritol 2,4-cyclodiphosphate synthase from Cytophaga hutchinsonii (strain ATCC 33406 / DSM 1761 / CIP 103989 / NBRC 15051 / NCIMB 9469 / D465).